We begin with the raw amino-acid sequence, 434 residues long: Protein HEAT INTOLERANT 4 (434 aa).

A Nuclear localization signal 1 motif is present at residues 1 to 8 (MKKGAKRK). A compositionally biased stretch (basic residues) spans 1–15 (MKKGAKRKGVSKAGR). The tract at residues 1-131 (MKKGAKRKGV…PVPKAKKPRA (131 aa)) is disordered. Residues 30–53 (ETTKTTQEESQQHEEEVVDEVKEN) show a composition bias toward basic and acidic residues. Residues 54–82 (GEEEEAKGDQEEEEDAKPDSLEEDEENQE) are compositionally biased toward acidic residues. The span at 83-98 (DEVKAEEVKEEVEKKP) shows a compositional bias: basic and acidic residues. The Nuclear localization signal 2 signature appears at 95–102 (EKKPVARR). Over residues 99 to 110 (VARRGGKRKRAT) the composition is skewed to basic residues. Residues 111-122 (KKDTEIKDEKKP) show a composition bias toward basic and acidic residues. Residues 363–394 (VKEQVRAAKKANREAKDARKKAIEEMSEDTKQ) adopt a coiled-coil conformation. Residues 370–377 (AKKANREA) carry the Nuclear localization signal 3 motif.

Its subcellular location is the nucleus. The protein localises to the nucleolus. Its function is as follows. Essential protein required for basal thermotolerance, especially during heat-induced chromocentre decondensation, thus regulating transcriptional gene silencing (TGS). In Arabidopsis thaliana (Mouse-ear cress), this protein is Protein HEAT INTOLERANT 4.